A 234-amino-acid polypeptide reads, in one-letter code: Glucosamine-6-phosphate deaminase (234 aa).

The active-site Proton acceptor; for enolization step is Asp-62. The active-site For ring-opening step is Asn-128. The active-site Proton acceptor; for ring-opening step is the His-130. Residue Glu-135 is the For ring-opening step of the active site.

Belongs to the glucosamine/galactosamine-6-phosphate isomerase family. NagB subfamily.

It carries out the reaction alpha-D-glucosamine 6-phosphate + H2O = beta-D-fructose 6-phosphate + NH4(+). Its pathway is amino-sugar metabolism; N-acetylneuraminate degradation; D-fructose 6-phosphate from N-acetylneuraminate: step 5/5. Its function is as follows. Catalyzes the reversible isomerization-deamination of glucosamine 6-phosphate (GlcN6P) to form fructose 6-phosphate (Fru6P) and ammonium ion. The polypeptide is Glucosamine-6-phosphate deaminase (Streptococcus pyogenes serotype M1).